Reading from the N-terminus, the 351-residue chain is Aromatic amino acid aminotransferase (351 aa).

K215 is subject to N6-(pyridoxal phosphate)lysine.

Belongs to the class-II pyridoxal-phosphate-dependent aminotransferase family. As to quaternary structure, homodimer. Pyridoxal 5'-phosphate serves as cofactor.

It carries out the reaction an aromatic L-alpha-amino acid + 2-oxoglutarate = an aromatic oxo-acid + L-glutamate. Its function is as follows. Aminotransferase that catalyzes the conversion of aromatic amino acids and 2-oxoglutarate into corresponding aromatic oxo acids and L-glutamate. This chain is Aromatic amino acid aminotransferase, found in Mycolicibacterium vanbaalenii (strain DSM 7251 / JCM 13017 / BCRC 16820 / KCTC 9966 / NRRL B-24157 / PYR-1) (Mycobacterium vanbaalenii).